The chain runs to 339 residues: Cathepsin B (339 aa).

The first 17 residues, 1 to 17 (MWWSLILLSCLLALTSA), serve as a signal peptide directing secretion. Positions 18-79 (HDKPSFHPLS…GRVAFGEDID (62 aa)) are cleaved as a propeptide — activation peptide. Intrachain disulfides connect Cys-93/Cys-122, Cys-105/Cys-150, Cys-141/Cys-207, Cys-142/Cys-146, Cys-179/Cys-211, and Cys-187/Cys-198. The active site involves Cys-108. A glycan (N-linked (GlcNAc...) asparagine) is linked at Asn-192. An N6-acetyllysine modification is found at Lys-220. Catalysis depends on residues His-278 and Asn-298. Positions 334-339 (QYWGRF) are excised as a propeptide.

Belongs to the peptidase C1 family. Dimer of a heavy chain and a light chain cross-linked by a disulfide bond. Interacts with SRPX2. Directly interacts with SHKBP1. In terms of tissue distribution, expressed in thyroid epithelial cells.

It is found in the lysosome. It localises to the melanosome. Its subcellular location is the secreted. The protein resides in the extracellular space. The protein localises to the apical cell membrane. It catalyses the reaction Hydrolysis of proteins with broad specificity for peptide bonds. Preferentially cleaves -Arg-Arg-|-Xaa bonds in small molecule substrates (thus differing from cathepsin L). In addition to being an endopeptidase, shows peptidyl-dipeptidase activity, liberating C-terminal dipeptides.. Functionally, thiol protease which is believed to participate in intracellular degradation and turnover of proteins. Cleaves matrix extracellular phosphoglycoprotein MEPE. Involved in the solubilization of cross-linked TG/thyroglobulin in the thyroid follicle lumen. Has also been implicated in tumor invasion and metastasis. The sequence is that of Cathepsin B (Ctsb) from Mus musculus (Mouse).